The following is a 306-amino-acid chain: Glutaminase (306 aa).

7 residues coordinate substrate: S64, N115, E159, N166, Y190, Y242, and V260.

Belongs to the glutaminase family. As to quaternary structure, homotetramer.

It catalyses the reaction L-glutamine + H2O = L-glutamate + NH4(+). This is Glutaminase from Aliivibrio fischeri (strain MJ11) (Vibrio fischeri).